Here is a 583-residue protein sequence, read N- to C-terminus: Pyruvate kinase isozyme A, chloroplastic (583 aa).

A chloroplast-targeting transit peptide spans 1–74 (MSQSLHFSPN…NSGVLYNNNN (74 aa)). A compositionally biased stretch (low complexity) spans 43–52 (KASTSPSSSS). The interval 43-75 (KASTSPSSSSDPQVLVADNGTGNSGVLYNNNNK) is disordered. Over residues 62–75 (GTGNSGVLYNNNNK) the composition is skewed to polar residues. Arg-134 lines the substrate pocket. Residues Asn-136, Asp-168, and Thr-169 each coordinate K(+). 136 to 139 (NMCH) is a binding site for ATP. Glu-333 is a Mg(2+) binding site. Residues Gly-356, Asp-357, and Ser-389 each coordinate substrate. Asp-357 contributes to the Mg(2+) binding site.

The protein belongs to the pyruvate kinase family. In terms of assembly, oligomer of alpha and beta subunits. Mg(2+) is required as a cofactor. K(+) serves as cofactor.

The protein resides in the plastid. It is found in the chloroplast. The enzyme catalyses pyruvate + ATP = phosphoenolpyruvate + ADP + H(+). It participates in carbohydrate degradation; glycolysis; pyruvate from D-glyceraldehyde 3-phosphate: step 5/5. In Ricinus communis (Castor bean), this protein is Pyruvate kinase isozyme A, chloroplastic.